The primary structure comprises 996 residues: Phototropin-1 (996 aa).

Residues 1 to 184 (MEPTEKPSTK…PGGRSGIPRV (184 aa)) form a disordered region. Residues Ser-23 and Ser-58 each carry the phosphoserine modification. The span at 49–59 (QNLSDPRGTSP) shows a compositional bias: polar residues. The segment covering 60–70 (QPRPQQEPAPS) has biased composition (pro residues). Positions 141 to 153 (SGGTENDPNGKKT) are enriched in polar residues. Over residues 155 to 166 (SQRNSQNSCRSS) the composition is skewed to low complexity. A PAS 1 domain is found at 184–257 (VSEDLKDALS…AKIRETLAAG (74 aa)). Position 185 is a phosphoserine (Ser-185). Asn-233 lines the FMN pocket. Residue Cys-234 is modified to S-4a-FMN cysteine. FMN contacts are provided by Arg-235, Gln-238, Arg-251, Asn-266, Asn-276, Gln-297, and Lys-302. One can recognise a PAC 1 domain in the interval 258 to 312 (NNYCGRILNYKKDGTSFWNLLTIAPIKDESGKVLKFIGMQVEVSKHTEGAKEKAL). Residues Ser-350, Ser-376, and Ser-410 each carry the phosphoserine modification. Disordered stretches follow at residues 351 to 413 (ESTN…SLSF) and 434 to 453 (YGEE…SVDD). The segment covering 434 to 443 (YGEEDDEISD) has biased composition (acidic residues). The span at 444–453 (RDERPESVDD) shows a compositional bias: basic and acidic residues. Position 450 is a phosphoserine (Ser-450). Residues 462–535 (KGIDLATTLE…KKIRNAIDNQ (74 aa)) enclose the PAS 2 domain. Asn-511 provides a ligand contact to FMN. At Cys-512 the chain carries S-4a-FMN cysteine. The FMN site is built by Arg-513, Gln-516, Arg-529, Asn-544, Asn-554, Phe-556, and Gln-575. In terms of domain architecture, PAC 2 spans 536–590 (TEVTVQLINYTKSGKKFWNIFHLQPMRDQKGEVQYFIGVQLDGSKHVEPVRNVIE). Residues 663–952 (FKPVKPLGSG…ANEVKQHSFF (290 aa)) enclose the Protein kinase domain. Residues 669 to 677 (LGSGDTGSV) and Lys-692 contribute to the ATP site. The active-site Proton acceptor is Asp-788. The interval 806-862 (DFDLSCLTSCKPQLLIPSIDEKKKKKQQKSQQTPIFMAEPMRASNSFVGTEEYIAPE) is activation loop.

It belongs to the protein kinase superfamily. AGC Ser/Thr protein kinase family. Homodimer; disulfide-linked. Interacts with PKS1, PKS2, RPT2, RPT3, PHOT2 and BLUS1. Subunit of a complex made of CAR6, PHOT1 and RPT3/NPH3. Associates with CBC1 and CBC2. Binds to BHP. The cofactor is FMN. Autophosphorylated at Ser-185, Ser-350 and Ser-410 in response to blue light irradiation. Post-translationally, 2 molecules of FMN bind covalently to cysteines after exposure to blue light and are reversed in the dark. Present in guard cells (at protein level).

The protein localises to the cell membrane. The protein resides in the cytoplasm. It carries out the reaction L-seryl-[protein] + ATP = O-phospho-L-seryl-[protein] + ADP + H(+). The enzyme catalyses L-threonyl-[protein] + ATP = O-phospho-L-threonyl-[protein] + ADP + H(+). With respect to regulation, autophosphorylation is inhibited by staurosporine, but not by tyrphostin 9, sphingosine, GW5074 and BML-265. In terms of biological role, protein kinase that acts as a blue light (BL) photoreceptor in a signal-transduction pathway for photo-induced movements. Triggers the phosphorylation of AHA1 and AHA2 C-terminal penultimate Thr in guard cells to activate them and induce stomatal opening in response to blue light (BL). Also phosphorylates BLUS1, a kinase involved in stomatal opening. Mediates the phosphorylation of CBC1 in stomata, but not of CBC2, in response to blue light. Required for blue light mediated mRNA destabilization. Mediates calcium spiking of extracellular origin in response to a low rate of blue light. Also mediates rapid membrane depolarization and growth inhibition in response to blue light. Necessary for root phototropism. Involved in hypocotyl phototropism under a low rate but not under a high rate of blue light. Contributes to the chloroplast accumulation but seems not to be required for chloroplast translocation. Regulates stomata opening and photomorphogenesis response of leaf tissue. Confers sensitivity to drought. Not involved in hypocotyl elongation inhibition, anthocyanin accumulation or cotyledon opening. Involved in the regulation of leaf position and morphology via the phosphorylation of ABCB19 during blue light responses to modulate auxin distribution. The protein is Phototropin-1 of Arabidopsis thaliana (Mouse-ear cress).